The chain runs to 384 residues: N-acetyldiaminopimelate deacetylase (384 aa).

The active site involves D75. E134 (proton acceptor) is an active-site residue.

It belongs to the peptidase M20A family. N-acetyldiaminopimelate deacetylase subfamily.

The catalysed reaction is N-acetyl-(2S,6S)-2,6-diaminopimelate + H2O = (2S,6S)-2,6-diaminopimelate + acetate. The protein operates within amino-acid biosynthesis; L-lysine biosynthesis via DAP pathway; LL-2,6-diaminopimelate from (S)-tetrahydrodipicolinate (acetylase route): step 3/3. In terms of biological role, catalyzes the conversion of N-acetyl-diaminopimelate to diaminopimelate and acetate. The chain is N-acetyldiaminopimelate deacetylase from Lactobacillus helveticus (strain DPC 4571).